The chain runs to 89 residues: Small ribosomal subunit protein uS15 (89 aa).

It belongs to the universal ribosomal protein uS15 family. Part of the 30S ribosomal subunit. Forms a bridge to the 50S subunit in the 70S ribosome, contacting the 23S rRNA.

Functionally, one of the primary rRNA binding proteins, it binds directly to 16S rRNA where it helps nucleate assembly of the platform of the 30S subunit by binding and bridging several RNA helices of the 16S rRNA. In terms of biological role, forms an intersubunit bridge (bridge B4) with the 23S rRNA of the 50S subunit in the ribosome. This Saccharopolyspora erythraea (strain ATCC 11635 / DSM 40517 / JCM 4748 / NBRC 13426 / NCIMB 8594 / NRRL 2338) protein is Small ribosomal subunit protein uS15.